A 315-amino-acid polypeptide reads, in one-letter code: Kinetochore protein SPC25 homolog (315 aa).

Residue methionine 1 is modified to N-acetylmethionine. Residues 57–91 (TAQSQVELMNLKADLREAEDELVKVLAVKTRKEAR) adopt a coiled-coil conformation. The segment at 261–315 (APAISFSTDTNMSTPENKRSKVQVNRRQKRGSESPLLAPVSTSATRRSSRFKGKK) is disordered. Over residues 266 to 275 (FSTDTNMSTP) the composition is skewed to polar residues. Basic residues predominate over residues 280–289 (SKVQVNRRQK).

It belongs to the SPC25 family. As to quaternary structure, component of the NDC80 complex, which consists of NDC80, NUF2, SPC24 and SPC25.

It is found in the chromosome. It localises to the centromere. In terms of biological role, acts as a component of the essential kinetochore-associated NDC80 complex, which is required for chromosome segregation and spindle checkpoint activity to ensure proper cell division. The chain is Kinetochore protein SPC25 homolog from Arabidopsis thaliana (Mouse-ear cress).